A 389-amino-acid chain; its full sequence is Phosphoglycerate kinase (389 aa).

Substrate-binding positions include 21–23 (DLN), arginine 36, 59–62 (HLGR), arginine 112, and arginine 145. ATP contacts are provided by residues lysine 196, glutamate 318, and 344–347 (GGDS).

It belongs to the phosphoglycerate kinase family. Monomer.

The protein localises to the cytoplasm. The enzyme catalyses (2R)-3-phosphoglycerate + ATP = (2R)-3-phospho-glyceroyl phosphate + ADP. It participates in carbohydrate degradation; glycolysis; pyruvate from D-glyceraldehyde 3-phosphate: step 2/5. The polypeptide is Phosphoglycerate kinase (Desulfovibrio desulfuricans (strain ATCC 27774 / DSM 6949 / MB)).